The chain runs to 403 residues: 5,7-dihydroxy-2-methylchromone synthase (403 aa).

Position 68 (histidine 68) interacts with CoA. The active site involves cysteine 174. Cysteine 174 is modified (cysteine sulfinic acid (-SO2H)). Residues leucine 277, serine 281, and 318-321 each bind CoA; that span reads GGRA.

The protein belongs to the thiolase-like superfamily. Chalcone/stilbene synthases family. Homodimer.

The catalysed reaction is 5 malonyl-CoA + 4 H(+) = 5,7-dihydroxy-2-methyl-4H-chromen-4-one + 5 CO2 + 5 CoA + H2O. Its pathway is secondary metabolite biosynthesis; flavonoid biosynthesis. In terms of biological role, catalyzes the iterative condensations of 5 molecules of malonyl-CoA to produce a pentaketide 5,7-dihydroxy-2-methylchromone. The polypeptide is 5,7-dihydroxy-2-methylchromone synthase (Aloe arborescens (Kidachi aloe)).